The following is a 119-amino-acid chain: NADH-quinone oxidoreductase subunit 7 (119 aa).

3 helical membrane passes run 11 to 31 (LIYVGVALFIGVAALLVGALL), 59 to 79 (VHFYVVAMLFILFDVEVAFLW), and 88 to 108 (LGLYGFLGVLAFTLLLFVGFL).

The protein belongs to the complex I subunit 3 family. NDH-1 is composed of 15 different subunits, Nqo1 to Nqo15. The complex has a L-shaped structure, with the hydrophobic arm (subunits Nqo7, Nqo8 and Nqo10 to Nqo14) embedded in the membrane and the hydrophilic peripheral arm (subunits Nqo1 to Nqo6, Nqo9 and Nqo15) protruding into the bacterial cytoplasm. The hydrophilic domain contains all the redox centers.

It is found in the cell inner membrane. The catalysed reaction is a quinone + NADH + 5 H(+)(in) = a quinol + NAD(+) + 4 H(+)(out). NDH-1 shuttles electrons from NADH, via FMN and iron-sulfur (Fe-S) centers, to quinones in the respiratory chain. The immediate electron acceptor for the enzyme in this species is menaquinone. Couples the redox reaction to proton translocation (for every two electrons transferred, four hydrogen ions are translocated across the cytoplasmic membrane), and thus conserves the redox energy in a proton gradient required for the synthesis of ATP. The chain is NADH-quinone oxidoreductase subunit 7 (nqo7) from Thermus thermophilus (strain ATCC 27634 / DSM 579 / HB8).